Reading from the N-terminus, the 396-residue chain is MDPRGTKRGAEKTEVAEPRNKLPRPAPSLPTDPALYSGPFPFYRRPSELGCFSLDAQRQYHGDARALRYYSPPPTNGPGPNFDLRDGYPDRYQPRDEEVQERLDHLLCWLLEHRGRLEGGPGWLAEAIVTWRGHLTKLLTTPYERQEGWQLAASRFQGTLYLSEVETPNARAQRLARPPLLRELMYMGYKFEQYMCADKPGSSPDPSGEVNTNVAFCSVLRSRLGSHPLLFSGEVDCTDPQAPSTQPPTCYVELKTSKEMHSPGQWRSFYRHKLLKWWAQSFLPGVPNVVAGFRNPDGFVSSLKTFPTMKMFEYVRNDRDGWNPSVCMNFCAAFLSFAQSTVVQDDPRLVHLFSWEPGGPVTVSVHQDAPYAFLPIWYVEAMTQDLPSPPKTPSPK.

Positions 1–20 are enriched in basic and acidic residues; that stretch reads MDPRGTKRGAEKTEVAEPRN. Residues 1–37 are disordered; it reads MDPRGTKRGAEKTEVAEPRNKLPRPAPSLPTDPALYS. Substrate contacts are provided by residues arginine 58, glutamate 101, and 131 to 133; that span reads WRG. Residue glutamate 192 participates in Mg(2+) binding. The substrate site is built by cysteine 217 and glutamate 234. 4 residues coordinate Mg(2+): glutamate 234, aspartate 236, glutamate 253, and leucine 254. The substrate site is built by lysine 255 and glutamine 280. Phosphothreonine is present on threonine 392. Serine 394 is modified (phosphoserine).

Belongs to the DXO/Dom3Z family. It depends on Mg(2+) as a cofactor. As to expression, ubiquitously expressed.

The protein localises to the nucleus. The catalysed reaction is a 5'-end triphospho-ribonucleoside in mRNA + H2O = a 5'-end phospho-ribonucleoside in mRNA + diphosphate + H(+). It carries out the reaction a 5'-end NAD(+)-phospho-ribonucleoside in mRNA + H2O = a 5'-end phospho-ribonucleoside in mRNA + NAD(+) + H(+). It catalyses the reaction a 5'-end NAD(+)-phospho-ribonucleoside in snoRNA + H2O = a 5'-end phospho-ribonucleoside in snoRNA + NAD(+) + H(+). The enzyme catalyses a 5'-end (N(7)-methyl 5'-triphosphoguanosine)-ribonucleoside-ribonucleotide in mRNA + H2O = a (N(7)-methyl 5'-triphosphoguanosine)-nucleoside + a 5'-end phospho-ribonucleoside in mRNA + H(+). The catalysed reaction is a 5'-end FAD-phospho-ribonucleoside in mRNA + H2O = a 5'-end phospho-ribonucleoside in mRNA + FAD + H(+). It carries out the reaction a 5'-end CoA-ribonucleoside in mRNA + H2O = 3'-dephospho-CoA + a 5'-end phospho-ribonucleoside in mRNA + H(+). Its function is as follows. Decapping enzyme for NAD-capped RNAs: specifically hydrolyzes the nicotinamide adenine dinucleotide (NAD) cap from a subset of RNAs by removing the entire NAD moiety from the 5'-end of an NAD-capped RNA. The NAD-cap is present at the 5'-end of some RNAs and snoRNAs. In contrast to the canonical 5'-end N7 methylguanosine (m7G) cap, the NAD cap promotes mRNA decay. Preferentially acts on NAD-capped transcripts in response to environmental stress. Also acts as a non-canonical decapping enzyme that removes the entire cap structure of m7G capped or incompletely capped RNAs and mediates their subsequent degradation. Specifically degrades pre-mRNAs with a defective 5'-end m7G cap and is part of a pre-mRNA capping quality control. Has decapping activity toward incomplete 5'-end m7G cap mRNAs such as unmethylated 5'-end-capped RNA (cap0), while it has no activity toward 2'-O-ribose methylated m7G cap (cap1). In contrast to canonical decapping enzymes DCP2 and NUDT16, which cleave the cap within the triphosphate linkage, the decapping activity releases the entire cap structure GpppN and a 5'-end monophosphate RNA. Also has 5'-3' exoribonuclease activities: The 5'-end monophosphate RNA is then degraded by the 5'-3' exoribonuclease activity, enabling this enzyme to decap and degrade incompletely capped mRNAs. Also possesses RNA 5'-pyrophosphohydrolase activity by hydrolyzing the 5'-end triphosphate to release pyrophosphates. Exhibits decapping activity towards FAD-capped RNAs. Exhibits decapping activity towards dpCoA-capped RNAs in vitro. This Homo sapiens (Human) protein is Decapping and exoribonuclease protein.